Reading from the N-terminus, the 498-residue chain is ATP synthase subunit beta, chloroplastic (498 aa).

Position 172 to 179 (172 to 179 (GGAGVGKT)) interacts with ATP.

The protein belongs to the ATPase alpha/beta chains family. As to quaternary structure, F-type ATPases have 2 components, CF(1) - the catalytic core - and CF(0) - the membrane proton channel. CF(1) has five subunits: alpha(3), beta(3), gamma(1), delta(1), epsilon(1). CF(0) has four main subunits: a(1), b(1), b'(1) and c(9-12).

It localises to the plastid. The protein localises to the chloroplast thylakoid membrane. It catalyses the reaction ATP + H2O + 4 H(+)(in) = ADP + phosphate + 5 H(+)(out). Its function is as follows. Produces ATP from ADP in the presence of a proton gradient across the membrane. The catalytic sites are hosted primarily by the beta subunits. This is ATP synthase subunit beta, chloroplastic from Populus tremuloides (Quaking aspen).